The primary structure comprises 29 residues: SWCDPATIKYVSGLTGCRAMVKLECLGSQ.

The protein belongs to the protease inhibitor I6 (cereal trypsin/alpha-amylase inhibitor) family.

It localises to the secreted. Alpha-amylase inhibitor. This is Alpha-amylase inhibitor 2 from Saussurea costus (Costus).